We begin with the raw amino-acid sequence, 457 residues long: Argininosuccinate lyase (457 aa).

The protein belongs to the lyase 1 family. Argininosuccinate lyase subfamily.

Its subcellular location is the cytoplasm. The catalysed reaction is 2-(N(omega)-L-arginino)succinate = fumarate + L-arginine. Its pathway is amino-acid biosynthesis; L-arginine biosynthesis; L-arginine from L-ornithine and carbamoyl phosphate: step 3/3. The sequence is that of Argininosuccinate lyase from Histophilus somni (strain 129Pt) (Haemophilus somnus).